We begin with the raw amino-acid sequence, 206 residues long: Protein Mabiki (206 aa).

The disordered stretch occupies residues 54–77 (FSDQDADFPPLPKRRRLGSSSSSV).

Plays a role in inducing apoptosis and is involved in the repair of head patterning defects in the embryo caused by extra maternal copies of the homeotic gene bicoid. The chain is Protein Mabiki from Drosophila melanogaster (Fruit fly).